A 329-amino-acid polypeptide reads, in one-letter code: MTDRTAAPSGPHIPVLLKPLLAAVAPVTGRWLDGTFGAGGYTKGLLAAGADQVIGVDRDPLAFEMAQPWAAEYGDRLVLQQGVFSRMDEYAQELDGVVLDLGVSSMQLDLAERGFSFMKEGPLDMRMSQDGPSAADLVAELSEVQLADVLYSFGEERASRRIAKAIVKERAQEPITTTLRLAEIIEGCLPRPKPGQSHPATRSFQALRIAVNGEYEELMGGLLAAERALKPGGLLAVVTFHSVEDRMVKRFFQHRANKTGNANRYAPAMEEQPSQFELVTRKAVGPDKDELAQNPRSRSALLRVGRRTDAAPVEITAKELSMPQLKETR.

Residues 39–41 (GGY), D57, F84, D100, and Q107 each bind S-adenosyl-L-methionine. Positions 285–305 (GPDKDELAQNPRSRSALLRVG) are disordered.

It belongs to the methyltransferase superfamily. RsmH family.

It localises to the cytoplasm. It carries out the reaction cytidine(1402) in 16S rRNA + S-adenosyl-L-methionine = N(4)-methylcytidine(1402) in 16S rRNA + S-adenosyl-L-homocysteine + H(+). In terms of biological role, specifically methylates the N4 position of cytidine in position 1402 (C1402) of 16S rRNA. The polypeptide is Ribosomal RNA small subunit methyltransferase H (Ruegeria sp. (strain TM1040) (Silicibacter sp.)).